The primary structure comprises 463 residues: MHLHFTPRQIVEKLDQYIIGQKDAKKAVAVALRNRYRRSKLAENLRDEIAPKNILMIGPTGVGKTEVARRMAKLVGAPFIKVEATKFTEVGYVGRDVESMVRDLVETSVRIVKEEMVVKVQDKAEEQANQRLVEILVPSPEKQSGFKNPLEMLFGGTQNSNQTTDSQEDVEIEKKRQDVERKLAAGLLEDEIVSIEVTEQQSSMFDMLQGTGMEQMGMNFQDALGSFMPKKTKKRKLSVKEARKVLTNEEAQRLIDMDEVTQEAVYRAEQLGIIFIDEIDKIAGKQSNSVDVSREGVQRDILPIVEGSNVATKYGSVKTDYILFVAAGAFHMSKPSDLIPELQGRFPIRVELTKLSTDDFVKILIEPDNALIKQYMALLATEGIEIEFSDEAIRKIAEIAYQVNQDTDNIGARRLHTIMEKLLEDLSFEASEITLEKITITPQYVEEKLATIAKNKDVSQFIL.

ATP-binding positions include I19, 61–66, D277, E341, and R413; that span reads GVGKTE.

It belongs to the ClpX chaperone family. HslU subfamily. A double ring-shaped homohexamer of HslV is capped on each side by a ring-shaped HslU homohexamer. The assembly of the HslU/HslV complex is dependent on binding of ATP.

It localises to the cytoplasm. ATPase subunit of a proteasome-like degradation complex; this subunit has chaperone activity. The binding of ATP and its subsequent hydrolysis by HslU are essential for unfolding of protein substrates subsequently hydrolyzed by HslV. HslU recognizes the N-terminal part of its protein substrates and unfolds these before they are guided to HslV for hydrolysis. In Bacillus anthracis (strain A0248), this protein is ATP-dependent protease ATPase subunit HslU.